The primary structure comprises 344 residues: Glucan endo-1,3-beta-glucosidase (344 aa).

An N-terminal signal peptide occupies residues 1–27; that stretch reads MALTRNRPFVVVLLLGFVIMSTITIGA. Catalysis depends on E123, which acts as the Proton donor. E268 functions as the Nucleophile in the catalytic mechanism.

The protein belongs to the glycosyl hydrolase 17 family.

The enzyme catalyses Hydrolysis of (1-&gt;3)-beta-D-glucosidic linkages in (1-&gt;3)-beta-D-glucans.. Implicated in the defense of plants against pathogens. This chain is Glucan endo-1,3-beta-glucosidase, found in Vitis vinifera (Grape).